We begin with the raw amino-acid sequence, 60 residues long: Metallothionein B (60 aa).

The beta stretch occupies residues 1–28 (MDPCECSKTGSCNCGGSCKCSNCACTSC). A divalent metal cation contacts are provided by Cys-4, Cys-6, Cys-12, Cys-14, Cys-18, Cys-20, Cys-23, Cys-25, Cys-28, Cys-32, Cys-33, Cys-35, Cys-36, Cys-40, Cys-43, Cys-47, Cys-49, Cys-54, Cys-58, and Cys-59. The tract at residues 29–60 (KKSCCPCCPSDCSKCASGCVCKGKTCDTSCCQ) is alpha.

It belongs to the metallothionein superfamily. Type 1 family.

Its function is as follows. Metallothioneins have a high content of cysteine residues that bind various heavy metals. The protein is Metallothionein B (mtb) of Oncorhynchus mykiss (Rainbow trout).